Here is a 328-residue protein sequence, read N- to C-terminus: MAEVRVQLLLSRRPESVSFARSVCGLLGAGPGLGTWPIHCSLKRGRLVLSSRPFPGASARLPLQRPPFCPFAALEERPRVPGAELPTDRGVDLGVAVILQSSDKTVLLTRRARTLSVSPNLWVPPGGHVELEEELLDGGLRELWEESGLHLPQGQFSWVPLGLWESAYPPRLSWGLPKYHHIVLYLLVISQESQQQLQARIQPNPNEVSALMWLTPDVAAAVAAAEDGTETPGLLPQDLPPSVLAVELEEDGRARPLVLHMSTLLRMIPTMAEDKERVSTGTKFALKLWLQHLGRTPPPCKSAAYLDPGPAKEEWNMDPLPPNQGSGK.

Residues 90 to 236 (GVDLGVAVIL…DGTETPGLLP (147 aa)) form the Nudix hydrolase domain. Residues 127–148 (GHVELEEELLDGGLRELWEESG) carry the Nudix box motif. Mg(2+) is bound by residues E142 and E146. Residues 299-328 (PCKSAAYLDPGPAKEEWNMDPLPPNQGSGK) form a disordered region.

It belongs to the Nudix hydrolase family. Mg(2+) is required as a cofactor. Mn(2+) serves as cofactor.

It carries out the reaction a 5'-end (N(7)-methyl 5'-triphosphoguanosine)-ribonucleoside in mRNA + H2O = N(7)-methyl-GDP + a 5'-end phospho-ribonucleoside in mRNA + 2 H(+). In terms of biological role, acts as a decapping enzyme capable of hydrolyzing monomethylated capped RNAs (in vitro). Hydrolyzes monomethylated capped RNA after alpha and beta phosphates to form N(7)-methyl-GDP. Shows low activity towards unmethylated capped RNA. In Homo sapiens (Human), this protein is m7GpppN-mRNA hydrolase NUDT17 (NUDT17).